The chain runs to 110 residues: UPF0060 membrane protein Pfl01_4105 (110 aa).

Helical transmembrane passes span 5–25 (LWFF…WMWL), 28–48 (GKSA…ALLL), 59–79 (AYAA…AVVE), and 84–104 (LGSD…ILFG).

Belongs to the UPF0060 family.

It is found in the cell inner membrane. This chain is UPF0060 membrane protein Pfl01_4105, found in Pseudomonas fluorescens (strain Pf0-1).